A 578-amino-acid chain; its full sequence is Triokinase/FMN cyclase (578 aa).

The DhaK domain maps to Ser-9–Trp-336. Residues Gly-56–His-59, Lys-109, and Asp-114 contribute to the dihydroxyacetone site. The Tele-hemiaminal-histidine intermediate role is filled by His-221. Phosphoserine is present on Ser-350. Residues Lys-372–Glu-571 enclose the DhaL domain. ATP contacts are provided by residues Asp-401 to Cys-404, Ser-446 to Ser-447, Gly-486, and Thr-494 to Met-495. Ser-511 and Ser-545 each carry phosphoserine. Asp-556 to Gly-558 is a binding site for ATP.

In terms of assembly, homodimer. Interacts with IFIH1 (via the CARD domains), the interaction is inhibited by viral infection. The cofactor is Mg(2+). It depends on Mn(2+) as a cofactor. Co(2+) serves as cofactor.

It catalyses the reaction dihydroxyacetone + ATP = dihydroxyacetone phosphate + ADP + H(+). The catalysed reaction is D-glyceraldehyde + ATP = D-glyceraldehyde 3-phosphate + ADP + H(+). The enzyme catalyses FAD = riboflavin cyclic-4',5'-phosphate + AMP + H(+). Its activity is regulated as follows. Each activity is inhibited by the substrate(s) of the other. Its function is as follows. Catalyzes both the phosphorylation of dihydroxyacetone and of glyceraldehyde, and the splitting of ribonucleoside diphosphate-X compounds among which FAD is the best substrate. Represses IFIH1-mediated cellular antiviral response. The polypeptide is Triokinase/FMN cyclase (TKFC) (Bos taurus (Bovine)).